We begin with the raw amino-acid sequence, 389 residues long: Ribonucleoside-diphosphate reductase subunit M2 (389 aa).

The residue at position 20 (Ser-20) is a Phosphoserine. Thr-33 carries the post-translational modification Phosphothreonine. The Cy motif lies at 49–51 (RRI). Asp-138, Glu-169, and His-172 together coordinate Fe cation. Tyr-176 is an active-site residue. Residues Glu-232, Glu-266, and His-269 each coordinate Fe cation.

This sequence belongs to the ribonucleoside diphosphate reductase small chain family. In terms of assembly, heterodimer of a large and a small subunit. Interacts (via Cy motif and when phosphorylated at Thr-33) with CCNF; the interaction occurs exclusively in G2 and early M. Requires Fe cation as cofactor. In terms of processing, phosphorylation on Ser-20 relieves the inhibitory effect on Wnt signaling. Phosphorylated on Thr-33 by CDK1 and CDK2; predominantly in G2 and M phase. Ubiquitinated by the SCF(CCNF) E3 ubiquitin-protein ligase complex; leading to its degradation by the proteasome.

Its subcellular location is the cytoplasm. The protein resides in the nucleus. The enzyme catalyses a 2'-deoxyribonucleoside 5'-diphosphate + [thioredoxin]-disulfide + H2O = a ribonucleoside 5'-diphosphate + [thioredoxin]-dithiol. Its function is as follows. Provides the precursors necessary for DNA synthesis. Catalyzes the biosynthesis of deoxyribonucleotides from the corresponding ribonucleotides. Inhibits Wnt signaling. This chain is Ribonucleoside-diphosphate reductase subunit M2 (RRM2), found in Macaca fascicularis (Crab-eating macaque).